The sequence spans 535 residues: Dipeptide-binding protein (535 aa).

The signal sequence occupies residues 1–28 (MRISLKKSGMLKLGLSLVAMTVAASVQA). C34 and C262 form a disulfide bridge. Glycyl-L-leucine is bound by residues 48 to 50 (TSG), 383 to 385 (RPY), and 433 to 436 (WTGD). The cysteines at positions 450 and 463 are disulfide-linked.

It belongs to the bacterial solute-binding protein 5 family. In terms of assembly, the complex is composed of two ATP-binding proteins (DppD and DppF), two transmembrane proteins (DppB and DppC) and a solute-binding protein (DppA).

The protein resides in the periplasm. Heme binding is inhibited by dipeptide. Functionally, part of the ABC transporter DppABCDF involved in dipeptide transport. Binds dipeptides and accepts a wide range of side chains, including small neutral, bulky hydrophobic, and positively and negatively charged groups. Tripeptides are poor substrates. DppA alone controls the specificity of the Dpp transporter. In addition, plays a role in chemotaxis toward peptides via interaction with the chemotaxis protein Tap. In terms of biological role, binds heme. When a foreign outer membrane heme receptor is expressed in E.coli, DppABCDF can also transport heme and its precursor, 5-aminolevulinic acid (ALA), from the periplasm into the cytoplasm. The sequence is that of Dipeptide-binding protein from Escherichia coli (strain K12).